The chain runs to 314 residues: Atrochrysone carboxyl ACP thioesterase AgnL7 (314 aa).

Zn(2+) is bound by residues histidine 103, histidine 105, aspartate 107, and histidine 108. The active-site Proton donor/acceptor is aspartate 107.

The protein belongs to the metallo-beta-lactamase superfamily. It depends on Zn(2+) as a cofactor.

It carries out the reaction atrochrysone carboxyl-[ACP] + H2O = atrochrysone carboxylate + holo-[ACP] + H(+). It functions in the pathway secondary metabolite biosynthesis. Its function is as follows. Atrochrysone carboxyl ACP thioesterase; part of the gene cluster that mediates the biosynthesis of agnestins, dihydroxy-xanthone metabolites. The pathway begins with the assembly and cyclization of atrochrysone thioester by the non-reducing polyketide synthase Agnpks1. The atrochrysone carboxyl ACP thioesterase AgnL7 then breaks the thioester bond and releases the atrochrysone carboxylic acid as the first enzyme-free intermediate. The decarboxylase AgnL1 then catalyzes the concerted decarboxylation-elimination required to convert atochrysone carboxylic acid into emodin anthrone, which is further oxidized to emodin by the anthrone oxygenase AgnL2. Emodin then undergoes reduction catalyzed by the oxidoreductase AgnL4 to yield the dihydroquinone tautomer which is the substrate for reduction by the short chain dehydrogenase AgnL6 reduction to produce hydroxyketone, followed by AgnL8 dehydration and likely spontaneous autoxidation to chrysophanol. Baeyer-Villiger oxidation by the oxidase AgnL3 leads to monodictyphenone via cleavage of the C-10/C-10a bond of chrysophanol. Alternative cleavage at the C-4a/C-10 bond of chrysophanol also leads to the formation some cephalone F. Further conversion to agnestins A and B, requires reduction to dihydro-monodictyphenone, oxidation to agnestin C probably via an epoxide, and rearrangement to either agnestin A or agnestin B directly, although agnestin A or agnestin B can also interconvert. Within the cluster, AgnR1 is the only unassigned oxidoreductase present which could be involved in this conversion. However, AgnR1 seems not to be involved in this step, and thus genes involved in the proposed oxidation/reduction may be located elsewhere on the genome. Further agnestin A derivatives are probably formed by spontaneous decarboxylations, dehydrations and methanolysis reactions. The protein is Atrochrysone carboxyl ACP thioesterase AgnL7 of Paecilomyces divaricatus (Penicillium divaricatum).